Consider the following 249-residue polypeptide: Meiotic drive suppressor wtf25 (249 aa).

The interval 1–40 (MKNNYTSLKSPLDEEDELKTDHEIDLEKGPLPEYDSEEEG) is disordered. The span at 19-30 (KTDHEIDLEKGP) shows a compositional bias: basic and acidic residues. Transmembrane regions (helical) follow at residues 73 to 93 (LLII…PAFC), 110 to 130 (WTLF…LTYF), 151 to 170 (NMIF…LKAE), and 187 to 207 (SASA…AETV).

This sequence belongs to the WTF family. As to quaternary structure, homomer. Interacts with other proteins that exhibit high sequence similarity.

The protein resides in the spore membrane. Its subcellular location is the vacuole membrane. Acts as a suppressor component of the dual wtf meiotic drive system, and can suppress but not confer meiotic drive by compatible poisons. Wtf meiotic drive systems promote unequal transmission of alleles from the parental zygote to progeny spores by encoding a poison and an antidote from the same locus; the poison is trans-acting and forms toxic aggregates in all spores within an ascus, wherease the antidote is spore-specific and targets aggregates for degradation by the vacuole. Meiotic drive by wtf systems therefore lead to poisoning of all progeny that do not inherit the dual poison/antidote allele, or express a compatible antidote. The sequence is that of Meiotic drive suppressor wtf25 from Schizosaccharomyces pombe (strain 972 / ATCC 24843) (Fission yeast).